A 535-amino-acid polypeptide reads, in one-letter code: Pyrichalasin C-18 hydroxylase (535 aa).

Residues 42–62 (LPSGTLIVLAALSLALLVAVL) form a helical membrane-spanning segment. N-linked (GlcNAc...) asparagine glycans are attached at residues asparagine 139 and asparagine 222. Cysteine 479 is a heme binding site.

It belongs to the cytochrome P450 family. The cofactor is heme.

It localises to the membrane. It participates in mycotoxin biosynthesis. Its function is as follows. Cytochrome P450 monooxygenase; part of the gene cluster that mediates the biosynthesis of the mycotoxin pyrichalasin H, a tyrosine-derived cytochalasan that inhibits the growth of rice seedlings, but also inhibits lymphocyte capping and actin polymerization and alters cell morphology. Pyrichalasin H is indicated as the responsible agent for the genus-specific pathogenicity of M.grisea toward crabgrass. The first step in the pathway is catalyzed by the O-methyltransferase pyiA which methylates free tyrosine to generate the precursor O-methyltyrosine. The hybrid PKS-NRPS pyiS, assisted by the enoyl reductase pyiC, are responsible for fusion of the O-methyltyrosine precursor and the polyketide backbone. The polyketide synthase module (PKS) of pyiS is responsible for the synthesis of the polyketide backbone and the downstream nonribosomal peptide synthetase (NRPS) amidates the carboxyl end of the polyketide with the O-methyltyrosine precursor. As the NRPS A-domain demonstrates substrate tolerance, pyiS can also use phenylalanine, tyrosine and even para-chlorophenylalanine as amino acid precursor, which leads to the production of novel cytochalasans, including halogenated cytochalasans. Because pyiS lacks a designated enoylreductase (ER) domain, the required activity is provided the enoyl reductase pyiC. Reduction by the hydrolyase pyiE leads to 1,5-dihydropyrrolone, which is substrate for dehydration and intra-molecular Diels-Alder cyclization by the Diels-Alderase pyiF to yield the required isoindolone-fused macrocycle. The tailoring cytochrome P450 monooxygenases piyD and piyG catalyze the hydroxylation at C-18 and C-7, respectivily, whereas the short-chain dehydrogenase/reductase pyiH reduces the carbonyl at C-21 in preparation for the transfer of an acetyl group by the acetyltransferase pyiB. These 3 reactions whose order is not clear yet, lead to the production of O-methylpyrichalasin J, a deacetylated pyrichalasin H. Finally, pyiB to converts O-methylpyrichalasin J into the final product pyrichalasin H via acetylation of C-21. In Pyricularia grisea (Crabgrass-specific blast fungus), this protein is Pyrichalasin C-18 hydroxylase.